A 501-amino-acid polypeptide reads, in one-letter code: Phase 2 flagellin (501 aa).

This sequence belongs to the bacterial flagellin family.

Its subcellular location is the secreted. It is found in the bacterial flagellum. Functionally, flagellin is the subunit protein which polymerizes to form the filaments of bacterial flagella. In Salmonella abortus-equi, this protein is Phase 2 flagellin (fljB).